The following is a 259-amino-acid chain: Phosphate import ATP-binding protein PstB 1 (259 aa).

The region spanning 13–254 is the ABC transporter domain; sequence IETKDVDLFY…PAEKETEDYI (242 aa). An ATP-binding site is contributed by 45–52; that stretch reads GPSGCGKS.

It belongs to the ABC transporter superfamily. Phosphate importer (TC 3.A.1.7) family. The complex is composed of two ATP-binding proteins (PstB), two transmembrane proteins (PstC and PstA) and a solute-binding protein (PstS).

The protein resides in the cell membrane. The enzyme catalyses phosphate(out) + ATP + H2O = ADP + 2 phosphate(in) + H(+). Part of the ABC transporter complex PstSACB involved in phosphate import. Responsible for energy coupling to the transport system. In Listeria innocua serovar 6a (strain ATCC BAA-680 / CLIP 11262), this protein is Phosphate import ATP-binding protein PstB 1.